The primary structure comprises 140 residues: ATP synthase epsilon chain (140 aa).

The protein belongs to the ATPase epsilon chain family. In terms of assembly, F-type ATPases have 2 components, CF(1) - the catalytic core - and CF(0) - the membrane proton channel. CF(1) has five subunits: alpha(3), beta(3), gamma(1), delta(1), epsilon(1). CF(0) has three main subunits: a, b and c.

The protein localises to the cell inner membrane. Its function is as follows. Produces ATP from ADP in the presence of a proton gradient across the membrane. The sequence is that of ATP synthase epsilon chain from Chromobacterium violaceum (strain ATCC 12472 / DSM 30191 / JCM 1249 / CCUG 213 / NBRC 12614 / NCIMB 9131 / NCTC 9757 / MK).